The primary structure comprises 213 residues: Kynurenine formamidase (213 aa).

A substrate-binding site is contributed by Trp20. His50, His54, and Asp56 together coordinate Zn(2+). Catalysis depends on His60, which acts as the Proton donor/acceptor. Zn(2+) contacts are provided by His161 and Glu173.

Belongs to the Cyclase 1 superfamily. KynB family. As to quaternary structure, homodimer. It depends on Zn(2+) as a cofactor.

It carries out the reaction N-formyl-L-kynurenine + H2O = L-kynurenine + formate + H(+). The protein operates within amino-acid degradation; L-tryptophan degradation via kynurenine pathway; L-kynurenine from L-tryptophan: step 2/2. In terms of biological role, catalyzes the hydrolysis of N-formyl-L-kynurenine to L-kynurenine, the second step in the kynurenine pathway of tryptophan degradation. The sequence is that of Kynurenine formamidase from Pseudomonas aeruginosa (strain ATCC 15692 / DSM 22644 / CIP 104116 / JCM 14847 / LMG 12228 / 1C / PRS 101 / PAO1).